A 42-amino-acid polypeptide reads, in one-letter code: Large ribosomal subunit protein eL32 (42 aa).

It belongs to the eukaryotic ribosomal protein eL32 family.

The sequence is that of Large ribosomal subunit protein eL32 (RPL32) from Zea mays (Maize).